Consider the following 469-residue polypeptide: Dynein axonemal assembly factor 11 (469 aa).

4 LRR repeats span residues isoleucine 20–cysteine 43, arginine 44–leucine 65, lysine 66–serine 89, and leucine 90–glutamine 110. One can recognise an LRRCT domain in the interval histidine 114–valine 135. 2 stretches are compositionally biased toward basic and acidic residues: residues lysine 179 to tyrosine 213 and serine 261 to lysine 286. Disordered stretches follow at residues lysine 179–arginine 290 and lysine 436–methionine 469.

It belongs to the tilB family.

The protein localises to the cytoplasm. Its subcellular location is the cell projection. It is found in the cilium. The protein resides in the dynein axonemal particle. It localises to the flagellum. Its function is as follows. Involved in dynein arm assembly, is important for expression and transporting outer dynein arm (ODA) proteins from the cytoplasm to the cilia. The protein is Dynein axonemal assembly factor 11 (dnaaf11) of Xenopus laevis (African clawed frog).